We begin with the raw amino-acid sequence, 554 residues long: 3-(3-hydroxy-phenyl)propionate/3-hydroxycinnamic acid hydroxylase (554 aa).

FAD is bound by residues 17–46 (QVAIAGAGPVGLMMANYLGQMGIDVLVVEK) and 285–295 (FRIDRVLLAGD).

The protein belongs to the PheA/TfdB FAD monooxygenase family. Requires FAD as cofactor.

It carries out the reaction 3-(3-hydroxyphenyl)propanoate + NADH + O2 + H(+) = 3-(2,3-dihydroxyphenyl)propanoate + NAD(+) + H2O. The catalysed reaction is (2E)-3-(3-hydroxyphenyl)prop-2-enoate + NADH + O2 + H(+) = (2E)-3-(2,3-dihydroxyphenyl)prop-2-enoate + NAD(+) + H2O. It functions in the pathway aromatic compound metabolism; 3-phenylpropanoate degradation. In terms of biological role, catalyzes the insertion of one atom of molecular oxygen into position 2 of the phenyl ring of 3-(3-hydroxyphenyl)propionate (3-HPP) and hydroxycinnamic acid (3HCI). This Escherichia coli O8 (strain IAI1) protein is 3-(3-hydroxy-phenyl)propionate/3-hydroxycinnamic acid hydroxylase.